A 504-amino-acid polypeptide reads, in one-letter code: Maturase K (504 aa).

Belongs to the intron maturase 2 family. MatK subfamily.

It is found in the plastid. The protein resides in the chloroplast. In terms of biological role, usually encoded in the trnK tRNA gene intron. Probably assists in splicing its own and other chloroplast group II introns. The sequence is that of Maturase K from Arabidopsis thaliana (Mouse-ear cress).